The sequence spans 28 residues: Turritoxin F21-2 (28 aa).

As to expression, expressed by the venom duct.

The protein resides in the secreted. Potent inhibitor of human alpha-3-beta-2 nAChRs (IC(50)=566.2 nM). Irreversibly inhibits the acetylcholine-induced response on human alpha-7/CHRNA7 (55% inhibition at 5.6 uM) and alpha-3-beta-2/CHRNA3-CHRNB2 (91% inhibition) nAChRs. The sequence is that of Turritoxin F21-2 from Polystira nobilis (Sea snail).